The sequence spans 158 residues: E3 ubiquitin ligase complex SCF subunit sconC (158 aa).

The tract at residues 100-158 (ILAANYLDIKALLDVGCKTVANMIKGKSPEEIRKTFNIQNDFTPEEEDQIRRENEWAEE) is interaction with the F-box domain of F-box proteins.

It belongs to the SKP1 family. In terms of assembly, component of the SCF (SKP1-CUL1-F-box protein) E3 ubiquitin ligase complexes.

The protein operates within protein modification; protein ubiquitination. Its function is as follows. Essential component of the SCF (SKP1-CUL1-F-box protein) E3 ubiquitin ligase complexes, which mediate the ubiquitination and subsequent proteasomal degradation of target proteins. Controls sulfur metabolite repression, probably by mediating the inactivation or degradation of the metR transcription factor. This Aspergillus fumigatus (strain CBS 144.89 / FGSC A1163 / CEA10) (Neosartorya fumigata) protein is E3 ubiquitin ligase complex SCF subunit sconC (sconC).